A 393-amino-acid polypeptide reads, in one-letter code: Formate-dependent phosphoribosylglycinamide formyltransferase (393 aa).

Residues 22 to 23 and Glu82 each bind N(1)-(5-phospho-beta-D-ribosyl)glycinamide; that span reads EL. ATP-binding positions include Arg114, Lys155, 160–165, 195–198, and Glu203; these read SSGKGQ and EGFI. The ATP-grasp domain maps to 119–308; that stretch reads RLAAEELDLP…QFALHARAIL (190 aa). Glu267 and Glu279 together coordinate Mg(2+). Residues Asp286, Lys356, and 363–364 each bind N(1)-(5-phospho-beta-D-ribosyl)glycinamide; that span reads RR.

This sequence belongs to the PurK/PurT family. Homodimer.

It carries out the reaction N(1)-(5-phospho-beta-D-ribosyl)glycinamide + formate + ATP = N(2)-formyl-N(1)-(5-phospho-beta-D-ribosyl)glycinamide + ADP + phosphate + H(+). Its pathway is purine metabolism; IMP biosynthesis via de novo pathway; N(2)-formyl-N(1)-(5-phospho-D-ribosyl)glycinamide from N(1)-(5-phospho-D-ribosyl)glycinamide (formate route): step 1/1. In terms of biological role, involved in the de novo purine biosynthesis. Catalyzes the transfer of formate to 5-phospho-ribosyl-glycinamide (GAR), producing 5-phospho-ribosyl-N-formylglycinamide (FGAR). Formate is provided by PurU via hydrolysis of 10-formyl-tetrahydrofolate. The polypeptide is Formate-dependent phosphoribosylglycinamide formyltransferase (Pseudomonas putida (strain W619)).